Consider the following 233-residue polypeptide: Protease inhibitor Egf1.0 (233 aa).

The first 28 residues, 1 to 28, serve as a signal peptide directing secretion; it reads MYIDTGIMSNNIFLFAFFALVGLTRIEA. The TIL domain occupies 52–104; sequence CRENEHYNSTRIECEEECNDRNNKLCYRFQQFCWCNEGYIRNSSHICVKLEDC. The tract at residues 201–233 is disordered; it reads FGKPKNSSAEKKPLETETQAQKFNGIIDQETLD.

This sequence belongs to the polydnaviridae EGF-like motif protein family. Interacts with host PAP1 and PAP3.

Functionally, counteracts the host humoral immune response by inhibiting the processing and the amidolytic activity of host PAP3. Thereby, melanization of host hemolymph, normally producing several reactive intermediates toxic for viruses, is deregulated and proper immune response cannot occur. In Microplitis demolitor (Parasitoid wasp), this protein is Protease inhibitor Egf1.0 (O12).